An 828-amino-acid chain; its full sequence is MTEDVMNDDFDSLVTKPTEFIDYNCDINNGFNDLLKSQKFDKLGFNYNVLSILGCQSSGKSSLLNSVFGLDFDVMNTKLGHSQTTKGLWGALVIPKDTGSGNVTIVIDVEGTDSRERGEGRLTFEHRSALLCLAISDCVVINLWYHSLGNLTGSNYGLLKTVVEANLELAEASENTLASGDYKTVLCFCIRDWFPELAPLETVRQKVVNEYMLGIWNDINKPDKFKNSKLEDIFRFELYGFNHALVHPDEFAKDSSRFRLAWATSISPKSYSRAVPSDGFFYYASNILQTVKDQSHLDIPNQREMLANFRCQEIKGGVLDEMVPSISSMLTDAQSGVMDDFQHRAVELVDVAVGKYLELASRYDKTTSNKIGNELVISVFSKLQPVFDAIISHHCSDLAVRATVRLNEKFAISGKERSPMVGGQKAADVWPKFNMLTDEIKAELYNSLNSHILSCAINYSHESGIQAQSDFDTSAAVDMFNVTFKNEVESVRARHIRALLGQITDLVDSGFKVIGEALLERNVTSDKYWGDVNDLIDRAYSTCLDTMGPCYTGLVPSVQPNEFEYLAFMILLQATKCNLERTESRITDIILERFEQFFQYQEFNGETVPRDWGSYTEEELKQTYTQCKKEALNIVAVLRDCSPPTLEVPAFEVSSLKPNHVLYQELSAGVDSLRATTTSLSDEVLVDTVKACRKRFQEFFRTAQQIQSSSKNGISWKNIPPPFWILLLLCSWNELCSVLRIVFKVQVLIPLIILGFIVVQYFSHLVFGTSADAVFRPFKRQARELAMVGTKWIFKVATSTAAAAVNAGAKTTFLSDDDNDSGKKAEEN.

The Cytoplasmic segment spans residues 1–718; the sequence is MTEDVMNDDF…SSKNGISWKN (718 aa). Residues 44-284 enclose the GB1/RHD3-type G domain; it reads GFNYNVLSIL…VPSDGFFYYA (241 aa). 54–61 contacts GTP; sequence GCQSSGKS. The helical transmembrane segment at 719–739 threads the bilayer; the sequence is IPPPFWILLLLCSWNELCSVL. Residues 740-742 are Lumenal-facing; the sequence is RIV. Residues 743–763 form a helical membrane-spanning segment; that stretch reads FKVQVLIPLIILGFIVVQYFS. Topologically, residues 764–828 are cytoplasmic; sequence HLVFGTSADA…NDSGKKAEEN (65 aa).

It belongs to the TRAFAC class dynamin-like GTPase superfamily. GB1/RHD3 GTPase family. RHD3 subfamily.

It localises to the endoplasmic reticulum membrane. Probable GTP-binding protein that may be involved in cell development. The protein is Protein SEY1 homolog of Babesia bovis.